Reading from the N-terminus, the 498-residue chain is Probable cytosol aminopeptidase (498 aa).

Lys-269 and Asp-274 together coordinate Mn(2+). The active site involves Lys-281. Mn(2+) is bound by residues Asp-292, Asp-351, and Glu-353. Residue Arg-355 is part of the active site.

Belongs to the peptidase M17 family. Requires Mn(2+) as cofactor.

Its subcellular location is the cytoplasm. The enzyme catalyses Release of an N-terminal amino acid, Xaa-|-Yaa-, in which Xaa is preferably Leu, but may be other amino acids including Pro although not Arg or Lys, and Yaa may be Pro. Amino acid amides and methyl esters are also readily hydrolyzed, but rates on arylamides are exceedingly low.. The catalysed reaction is Release of an N-terminal amino acid, preferentially leucine, but not glutamic or aspartic acids.. In terms of biological role, presumably involved in the processing and regular turnover of intracellular proteins. Catalyzes the removal of unsubstituted N-terminal amino acids from various peptides. In Glaesserella parasuis serovar 5 (strain SH0165) (Haemophilus parasuis), this protein is Probable cytosol aminopeptidase.